The primary structure comprises 409 residues: Single Ig IL-1-related receptor (409 aa).

Topologically, residues 1–117 (MAGVCDMAPN…TLWRAGPAGH (117 aa)) are extracellular. The region spanning 9–108 (PNFLSPSEDQ…VWNVSSHSFT (100 aa)) is the Ig-like C2-type domain. N-linked (GlcNAc...) asparagine glycosylation is found at N31, N58, N73, N85, and N101. C32 and C97 are joined by a disulfide. Residues 118-138 (VAAVLASLLVLVVLLLVALLY) form a helical; Signal-anchor for type III membrane protein membrane-spanning segment. Residues 139–409 (VKCRLNMLLW…FYCLVSEDDV (271 aa)) lie on the Cytoplasmic side of the membrane. The TIR domain occupies 162–306 (KLYDAYVSYS…DFWKELQLAL (145 aa)). S382 is modified (phosphoserine).

Belongs to the interleukin-1 receptor family. As to quaternary structure, interacts with IL1R1, IRAK1, TLR4, TLR5, TLR9 and TRAF6. Upon IL-1 stimulation found in a complex at least composed of IL1R1, SIGIRR, MYD88, IRAK1 and TRAF6. Upon stimulation with LPC found in a complex at least composed of TLR4, SIG1IR, MYD88, IRAK1 and TRAF6. Interacts with PALM3. As to expression, expressed at high levels in kidney, and at moderate levels in colon, small intestine, lung, spleen and liver. Not expressed in brain and muscle. Expressed at high levels in epithelial cells, at moderate levels in splenocytes, and at low or undetectable levels in fibroblasts or endothelial cells. Expressed in mucosal and dendritic cells.

Its subcellular location is the membrane. In terms of biological role, acts as a negative regulator of the Toll-like and IL-1R receptor signaling pathways. Attenuates the recruitment of receptor-proximal signaling components to the TLR4 receptor, probably through an TIR-TIR domain interaction with TLR4. Through its extracellular domain interferes with the heterodimerization of Il1R1 and IL1RAP. The protein is Single Ig IL-1-related receptor (Sigirr) of Mus musculus (Mouse).